Reading from the N-terminus, the 1373-residue chain is TAL effector protein PthXo1 (1373 aa).

Disordered stretches follow at residues 1-68 and 127-152; these read MDPI…SAGS and AARP…PAAQ. The segment covering 131–141 has biased composition (basic residues); that stretch reads PRAKPAPRRRA. Positions 142-152 are enriched in low complexity; sequence AQPSDASPAAQ. The Cryptic repeat -1 repeat unit spans residues 221 to 239; that stretch reads THEDIVGVGKQWSGARALE. The stretch at 256 to 273 is one Cryptic repeat 0 repeat; the sequence is DTGQLVKIAKRGGVTAVE. 23 Core repeat repeats span residues 289 to 322, 323 to 356, 357 to 390, 391 to 424, 425 to 458, 459 to 492, 493 to 525, 526 to 559, 560 to 593, 594 to 627, 628 to 661, 662 to 695, 696 to 729, 730 to 763, 764 to 797, 798 to 831, 832 to 865, 866 to 899, 900 to 933, 934 to 967, 968 to 1001, 1002 to 1034, and 1035 to 1068; these read LTPA…QAHG, LPPD…QAHG, LTPD…QAHG, LTPD…QTHG, LTQV…QAHG, LTQE…QAHG, LTPA…QDHG, LTLA…QAHG, LTQD…QDHG, LTPD…QDHG, and LTLD…QDHG. 4 HEAT repeats span residues 714–760, 782–828, 850–893, and 918–961; these read LETV…VLCQ and LETV…LLPV. One copy of the HEAT 5 repeat lies at 1053 to 1091; the sequence is LETVQRLLPVLCQDHGLTPNQVVAIASNGGKQALESIVA. Residues 1069-1087 form a Core repeat 23.5 repeat; that stretch reads LTPNQVVAIASNGGKQALE. The acidic activation domain stretch occupies residues 1136–1364; the sequence is RVNRRIGERT…ELAWLMELLP (229 aa). Positions 1222 to 1225 match the Nuclear localization signal NLS1 motif; it reads KRAK. The segment at 1250–1286 is disordered; sequence LDAPSPMHEGDQTGASSRKRSRSDRAVTGPSAQHSFE. The short motif at 1268–1271 is the Nuclear localization signal NLS2 element; the sequence is KRSR. Positions 1305–1308 match the Nuclear localization signal NLS3 motif; sequence KRPR.

This sequence belongs to the transcription activator-like effector (TALE) family.

It localises to the secreted. The protein resides in the host nucleus. Its function is as follows. Avirulence protein. Acts as a transcription factor in rice, inducing expression of a number of host genes including SWEET11 (Os8N3, XA13, AC Q6YZF3) in susceptible plants with the Xa13 allele. Plants with the xa13 allele, which has an altered promoter, are resistant to bacterial blight caused by this bacterial strain and do not induce SWEET11. The xa13 allele elicits an atypical hypersensitive response (HR). PthXo1 binds SWEET11 promoter DNA in a sequence-specific manner. The polypeptide is TAL effector protein PthXo1 (pthXo1) (Xanthomonas oryzae pv. oryzae (strain PXO99A)).